Here is a 436-residue protein sequence, read N- to C-terminus: 3-ketoacyl-CoA thiolase (436 aa).

Cysteine 99 functions as the Acyl-thioester intermediate in the catalytic mechanism. Catalysis depends on proton acceptor residues histidine 392 and cysteine 422.

The protein belongs to the thiolase-like superfamily. Thiolase family. Heterotetramer of two alpha chains (FadJ) and two beta chains (FadI).

The protein localises to the cytoplasm. The catalysed reaction is an acyl-CoA + acetyl-CoA = a 3-oxoacyl-CoA + CoA. It functions in the pathway lipid metabolism; fatty acid beta-oxidation. Its function is as follows. Catalyzes the final step of fatty acid oxidation in which acetyl-CoA is released and the CoA ester of a fatty acid two carbons shorter is formed. This is 3-ketoacyl-CoA thiolase from Escherichia coli O8 (strain IAI1).